The sequence spans 1310 residues: Adhesion G protein-coupled receptor A3 (1310 aa).

The first 27 residues, 1–27 (MEPPPPLLLLPLALLALLWGGERGAAA), serve as a signal peptide directing secretion. Residues 28–70 (LPAGCKHDGRARGTGRAAAAAEGKVVCSSLELAQVLPPDTLPN) form the LRRNT domain. Residues 28 to 747 (LPAGCKHDGR…TELYTPAASL (720 aa)) lie on the Extracellular side of the membrane. N-linked (GlcNAc...) asparagine glycosylation is found at Asn-70 and Asn-87. LRR repeat units lie at residues 71–92 (RTVTLILSNNKISELKNGSFSG), 95–116 (LLERLDLRNNLISRIAPGAFWG), 119–140 (SLKRLDLTNNRIGCLNADVFRG), and 143–164 (NLVRLNLSGNLFTSLSQGTFDY). Asn-148, Asn-195, Asn-290, Asn-321, Asn-422, Asn-442, Asn-581, Asn-641, Asn-676, and Asn-717 each carry an N-linked (GlcNAc...) asparagine glycan. The LRRCT domain maps to 176–226 (EYLLCDCNILWMHRWVKERNITVRDTRCVYPKSLQAQPVTGVKQELLTCDP). Residues 231–329 (PSFYMTPSHR…GNNTRTVDIV (99 aa)) form the Ig-like domain. Cys-253 and Cys-313 are joined by a disulfide. The GAIN-B domain maps to 572 to 739 (LDKQLSFKCN…AVLMDLTGTE (168 aa)). The interval 690–739 (AAQWDFDLLNGQGGWKSDGCCILYSDENITTIQCGSLGNYAVLMDLTGTE) is GPS. Cys-709 and Cys-723 are disulfide-bonded. The helical transmembrane segment at 748 to 768 (LHPVVYTTAITLLLCLLAVII) threads the bilayer. Residues 769 to 785 (SYMYHHSLIRISLKSWH) are Cytoplasmic-facing. A helical transmembrane segment spans residues 786-806 (MLVNLCFHILLTCVVFVGGIT). The Extracellular portion of the chain corresponds to 807 to 815 (QTRNASVCQ). An N-linked (GlcNAc...) asparagine glycan is attached at Asn-810. A helical transmembrane segment spans residues 816–836 (AVGIILHYSTLATVLWVGVTA). At 837-865 (RNIYKQVTKKAKRCQDPDEPPAPPRPMLR) the chain is on the cytoplasmic side. A helical membrane pass occupies residues 866 to 886 (FYLIGGGIPIIVCGITAAANI). Residues 887–908 (KNYGSRPSAPYCWMAWEPSLGA) are Extracellular-facing. The chain crosses the membrane as a helical span at residues 909 to 929 (FYGPASFITFVNCMYFLSIFI). At 930 to 985 (QLKRHPERKYELKEPTEEQQRLAANENGEINHQDSMSLSLISTSTLENEHSFQSQL) the chain is on the cytoplasmic side. Residues 986–1006 (LGASLTLLLYVILWMFGAMAV) traverse the membrane as a helical segment. The Extracellular portion of the chain corresponds to 1007-1013 (SLYYPLD). Residues 1014–1034 (LVFSFFFGATCLSFSAFMMVH) traverse the membrane as a helical segment. Topologically, residues 1035-1310 (HCINREDVRL…TGLWKHETTV (276 aa)) are cytoplasmic. 3 disordered regions span residues 1065–1084 (PPNSSATNGEAPKCTNSSAE), 1187–1208 (VEGSVQNGLPKSRPGSNEGHSR), and 1221–1264 (YNPP…ADLE). Residues 1222–1239 (NPPQQDSSDACSTLPKSS) are compositionally biased toward polar residues. A PDZ-binding motif is present at residues 1308–1310 (TTV).

The protein belongs to the G-protein coupled receptor 2 family. Adhesion G-protein coupled receptor (ADGR) subfamily. As to quaternary structure, interacts (via PDZ-binding motif) with DLG1. Expressed by spermatogonial progenitor cells located within the outer cell layer of the seminiferous tubule and by multipotent adult spermatogonial-derived stem cells.

Its subcellular location is the membrane. Orphan receptor that may have a role in planar cell polarity pathway. The protein is Adhesion G protein-coupled receptor A3 (Adgra3) of Mus musculus (Mouse).